The primary structure comprises 287 residues: Cysteine-rich repeat secretory protein 58 (287 aa).

Residues 1-20 (METTKKLFALLCLFVTMNQA) form the signal peptide. Residues 21–267 (ISVSDPDDME…GSFSHRGNNK (247 aa)) are Extracellular-facing. 2 Gnk2-homologous domains span residues 28-130 (DMET…DKFF) and 135-246 (ETNP…TYNS). N-linked (GlcNAc...) asparagine glycans are attached at residues asparagine 39, asparagine 43, asparagine 59, asparagine 68, asparagine 89, asparagine 99, asparagine 107, asparagine 208, and asparagine 245. The chain crosses the membrane as a helical span at residues 268–286 (LLGGMVLAVSVSVFAFLSL). Position 287 (valine 287) is a topological domain, cytoplasmic.

The protein belongs to the cysteine-rich repeat secretory protein family.

The protein localises to the membrane. This is Cysteine-rich repeat secretory protein 58 (CRRSP58) from Arabidopsis thaliana (Mouse-ear cress).